Reading from the N-terminus, the 2150-residue chain is A disintegrin and metalloproteinase with thrombospondin motifs gon-1 (2150 aa).

The signal sequence occupies residues 1–28 (MRSIGGSFHLLQPVVAALILLVVCLVYA). The propeptide occupies 29–273 (LQSGSGTISE…VIERKARSRR (245 aa)). 4 N-linked (GlcNAc...) asparagine glycosylation sites follow: N134, N213, N243, and N248. Positions 280–493 (HYVEVLVVAD…GQTQCLFDQP (214 aa)) constitute a Peptidase M12B domain. 2 disulfide bridges follow: C402-C488 and C440-C470. H424 serves as a coordination point for Zn(2+). Residue E425 is part of the active site. Zn(2+) is bound by residues H428 and H434. The Disintegrin domain maps to 503–587 (FVRDEPGKKY…RLAPESLTKI (85 aa)). Residues 588–643 (DGQWGDWRSWGECSRTCGGGVQKGLRDCDSPKPRNGGKYCVGQRERYRSCNTQECP) enclose the TSP type-1 1 domain. Cystine bridges form between C600–C637, C604–C642, and C615–C627. A glycan (N-linked (GlcNAc...) asparagine) is linked at N842. TSP type-1 domains lie at 943-1003 (CSTR…IDCS), 1004-1057 (GRKW…RECN), 1060-1115 (PCPR…HACT), 1116-1165 (WWQF…KPCH), 1168-1227 (SCPK…GTCP), 1228-1277 (FWRN…QTCH), 1280-1339 (PCTS…DTCD), 1352-1409 (PPIR…RDCS), 1410-1469 (YWKM…EPCP), 1474-1524 (HIGS…ELCP), and 1527-1585 (TNNS…PPCR). N-linked (GlcNAc...) asparagine glycans are attached at residues N1139 and N1199. 2 N-linked (GlcNAc...) asparagine glycosylation sites follow: N1370 and N1432. 4 N-linked (GlcNAc...) asparagine glycosylation sites follow: N1528, N1590, N1606, and N1654. Positions 1590 to 1614 (NKTSSASMTSLSSSNSNTTSSASAS) are disordered. The span at 1592–1614 (TSSASMTSLSSSNSNTTSSASAS) shows a compositional bias: low complexity. TSP type-1 domains follow at residues 1621–1675 (PVVS…VRCR), 1678–1736 (HCPR…VACP), 1737–1793 (AYRW…DTSN), 1794–1866 (CPYE…NPCD), and 1867–1924 (SEFK…RNCL). 6 cysteine pairs are disulfide-bonded: C1679-C1718, C1690-C1694, C1690-C1730, C1694-C1735, C1705-C1718, and C1730-C1735. Residues N1828 and N1855 are each glycosylated (N-linked (GlcNAc...) asparagine). A GON domain is found at 1924 to 2123 (LPSTCQELKS…RYKGLIFEVN (200 aa)). 3 N-linked (GlcNAc...) asparagine glycosylation sites follow: N1942, N1960, and N1997.

It depends on Zn(2+) as a cofactor. Expressed by the gonadal distal tip cells (DTCs). Expressed in muscles, including body wall, vulval and anal depressor muscles. Expressed in motor neurons and in ASI and ASJ neurons.

It localises to the secreted. It is found in the extracellular space. The protein resides in the extracellular matrix. The protein localises to the basement membrane. Its subcellular location is the endoplasmic reticulum. It localises to the golgi apparatus. Functionally, secreted metalloprotease required for distal tip cell (DTC) migration along the body wall basement membranes, a key step that promotes gonad morphogenesis. Probably acts by remodeling the basement membrane during cell migration. Required to restrict presynaptic growth at the neuromuscular junctions (NMJ) in late larval stage and in adult motor neurons, probably by controlling collagen IV emb-9 degradation, a component of the synapse basement membrane. Also involved in the organization of adult muscle morphology. Has a protease-independent function in promoting the transport from the endoplasmic reticulum to the Golgi apparatus of a variety of secretory cargos. Required for the secretion of insulin-like peptide ins-7, daf-28 and ins-18 and TGF beta-like protein daf-7. In peripheral tissues, negatively regulates insulin-mediated daf-16 translocation and thereby negatively regulates lifespan and dauer formation. The chain is A disintegrin and metalloproteinase with thrombospondin motifs gon-1 from Caenorhabditis elegans.